Here is a 312-residue protein sequence, read N- to C-terminus: Glyoxylate/hydroxypyruvate reductase A (312 aa).

Arg-227 is an active-site residue. Catalysis depends on His-275, which acts as the Proton donor.

This sequence belongs to the D-isomer specific 2-hydroxyacid dehydrogenase family. GhrA subfamily.

It localises to the cytoplasm. It catalyses the reaction glycolate + NADP(+) = glyoxylate + NADPH + H(+). The enzyme catalyses (R)-glycerate + NAD(+) = 3-hydroxypyruvate + NADH + H(+). The catalysed reaction is (R)-glycerate + NADP(+) = 3-hydroxypyruvate + NADPH + H(+). Catalyzes the NADPH-dependent reduction of glyoxylate and hydroxypyruvate into glycolate and glycerate, respectively. In Escherichia coli O81 (strain ED1a), this protein is Glyoxylate/hydroxypyruvate reductase A.